The sequence spans 389 residues: Tyrosinase-like protein phomQ1 (389 aa).

Residues 53–73 (TIIVVSVITFAAIIGCWVFLS) form a helical membrane-spanning segment. Residues H141 and H150 each coordinate Cu cation. N220 is a glycosylation site (N-linked (GlcNAc...) asparagine). H290 and H316 together coordinate Cu cation.

Belongs to the tyrosinase family. The cofactor is Cu(2+).

The protein localises to the membrane. It functions in the pathway mycotoxin biosynthesis. Its function is as follows. Tyrosinase-like protein; part of the gene cluster that mediates the biosynthesis of the phomopsins, a group of hexapeptide mycotoxins which infects lupins and causes lupinosis disease in livestock. Within the pathway, phomQ1 functions as a halogenase, converting. The pathway starts with the processing of the precursor phomA by several endopeptidases including kexin proteases as well as the cluster-specific S41 family peptidase phomP1 and the oligopeptidase phomG to produce 10 identical copies of the hexapeptide Tyr-Val-Ile-Pro-Ile-Asp. After being excised from the precursor peptide, the core peptides are cyclized and modified post-translationally by enzymes encoded within the gene cluster. The timing and order of proteolysis of the phomA precursor and PTMs are still unknown. Two tyrosinase-like enzymes, phomQ1 and phomQ2, catalyze the chlorination and hydroxylation of Tyr, respectively. PhomYb, is proposed to be involved in the construction of the macrocyclic structure. The other 4 ustYa family proteins may be involved in PTMs that generate the unique structure of phomopsin A. PhomYa is required for the hydroxylation of C-beta of Tyr. PhomYc, phomYd, and phomYe are responsible for the biosynthesis of 2,3-dehydroisoleucine (dIle), 2,3-dehydroaspartic acid (dAsp), and 3,4-dehydroproline (dPro), respectively. While dIle formation by phomYc is indispensable for the installation of dAsp by phomYd, the order of the other PTMs have not been elucidated yet. Most of the biosynthetic enzymes likely have broad substrate specificity, and thus, there might be a metabolic grid from a precursor to phomopsin A. The enzyme(s) responsible for the biosynthesis of 3,4-dehydrovaline (dVal) have also not been identified yet. Finally, phomM acts as an S-adenosylmethionine-dependent alpha-N-methyltransferase that catalyzes two successive N-methylation reactions, converting N-desmethyl-phomopsin A to phomopsin A and phomopsin A further to an N,N-dimethylated congener called phomopsin E. This is Tyrosinase-like protein phomQ1 from Diaporthe leptostromiformis (Lupinosis disease fungus).